A 683-amino-acid chain; its full sequence is Methionine--tRNA ligase (683 aa).

Residues 15–25 (YYPSGKLHIGN) carry the 'HIGH' region motif. The short motif at 311–315 (KMSKS) is the 'KMSKS' region element. Lys-314 is a binding site for ATP. Residues 581 to 683 (DFDKVELKVA…DNMVNGSLIS (103 aa)) form the tRNA-binding domain.

This sequence belongs to the class-I aminoacyl-tRNA synthetase family. MetG type 2B subfamily. Homodimer.

The protein resides in the cytoplasm. The enzyme catalyses tRNA(Met) + L-methionine + ATP = L-methionyl-tRNA(Met) + AMP + diphosphate. Is required not only for elongation of protein synthesis but also for the initiation of all mRNA translation through initiator tRNA(fMet) aminoacylation. This Lactiplantibacillus plantarum (strain ATCC BAA-793 / NCIMB 8826 / WCFS1) (Lactobacillus plantarum) protein is Methionine--tRNA ligase.